Reading from the N-terminus, the 264-residue chain is Undecaprenyl-diphosphatase (264 aa).

Helical transmembrane passes span 7-27 (IVLA…SAHL), 41-61 (LIFD…YYQA), 89-109 (VLLG…FVAV), 114-134 (IEII…ASWF), 144-164 (TISW…LIPG), 186-206 (IQFS…LMLI), 219-239 (LLVL…IFVI), and 244-264 (MVGM…LFFL).

This sequence belongs to the UppP family.

Its subcellular location is the cell inner membrane. The catalysed reaction is di-trans,octa-cis-undecaprenyl diphosphate + H2O = di-trans,octa-cis-undecaprenyl phosphate + phosphate + H(+). Catalyzes the dephosphorylation of undecaprenyl diphosphate (UPP). Confers resistance to bacitracin. This Vesicomyosocius okutanii subsp. Calyptogena okutanii (strain HA) protein is Undecaprenyl-diphosphatase.